We begin with the raw amino-acid sequence, 177 residues long: MFHFKLTPELRKELKDPLGKLIRGEIPKPYLMIREELERARHVVTVGDVVTENVLRLGIKPSLAIYDHKTKRQEYSPDIESDAVIMTVQNPPGTITKALLNAIKKGFGLAERGRKVYIKVCGEEDLAAIPAVLYAPEGSVVLYGQPDEGVVLIKVTPECKLKCGRLMSKMEVVRDGD.

7 residues coordinate GTP: Asp48, Val49, Val50, Asp67, Lys69, Glu124, and Asp147.

It belongs to the GTP-dependent DPCK family.

The enzyme catalyses 3'-dephospho-CoA + GTP = GDP + CoA + H(+). The protein operates within cofactor biosynthesis; coenzyme A biosynthesis. In terms of biological role, catalyzes the GTP-dependent phosphorylation of the 3'-hydroxyl group of dephosphocoenzyme A to form coenzyme A (CoA). This chain is GTP-dependent dephospho-CoA kinase, found in Thermococcus onnurineus (strain NA1).